The primary structure comprises 258 residues: Phosphate import ATP-binding protein PstB (258 aa).

In terms of domain architecture, ABC transporter spans 13–253 (IEVENLNLWY…PKEQSTEDYI (241 aa)). Position 45 to 52 (45 to 52 (GPSGCGKS)) interacts with ATP.

The protein belongs to the ABC transporter superfamily. Phosphate importer (TC 3.A.1.7) family. The complex is composed of two ATP-binding proteins (PstB), two transmembrane proteins (PstC and PstA) and a solute-binding protein (PstS).

Its subcellular location is the cell membrane. It catalyses the reaction phosphate(out) + ATP + H2O = ADP + 2 phosphate(in) + H(+). In terms of biological role, part of the ABC transporter complex PstSACB involved in phosphate import. Responsible for energy coupling to the transport system. This is Phosphate import ATP-binding protein PstB from Methanosarcina acetivorans (strain ATCC 35395 / DSM 2834 / JCM 12185 / C2A).